The following is a 159-amino-acid chain: MPKKIVRVLIEGGKATPGPPLGPALGGLGLNMGQIVKEINEKTSSYSGMRVPVEIEVDTETKKFEIRVGTPPTSMLILRELKAEKGSSDASKKIGNLKMETVVNIAKMKLASSNTPELKQVVKQVLGTALSMGVTVEGKDPREVQREVDSGAWDKLLGG.

Basic and acidic residues predominate over residues 137 to 149 (EGKDPREVQREVD). Residues 137 to 159 (EGKDPREVQREVDSGAWDKLLGG) form a disordered region.

It belongs to the universal ribosomal protein uL11 family. In terms of assembly, part of the ribosomal stalk of the 50S ribosomal subunit. Interacts with L10 and the large rRNA to form the base of the stalk. L10 forms an elongated spine to which L12 dimers bind in a sequential fashion forming a multimeric L10(L12)X complex.

Its function is as follows. Forms part of the ribosomal stalk which helps the ribosome interact with GTP-bound translation factors. This chain is Large ribosomal subunit protein uL11, found in Korarchaeum cryptofilum (strain OPF8).